The primary structure comprises 751 residues: Methionine--tRNA ligase, cytoplasmic (751 aa).

S2 carries the N-acetylserine modification. An interaction with ARC1 region spans residues 36-92; sequence LKPEVDNDNAAMELRNTKEPFLLFDANAILRYVMDDFEGQTSDKYQFALASLQNLLY. The short motif at 205–215 is the 'HIGH' region element; that stretch reads PYVNNVPHLGN. K411 is a binding site for ATP. Positions 525-529 match the 'KMSKS' region motif; sequence KFSKS.

It belongs to the class-I aminoacyl-tRNA synthetase family. In terms of assembly, component of a yeast aminoacyl-tRNA synthase (aaRS) complex formed by methionyl-tRNA synthase MES1, glutamyl-tRNA synthase GUS1 and the tRNA aminoacylation cofactor ARC1 in a stoichiometric complex. Interacts (via N-ter) with ARC1 (via N-ter). Can also form a stable binary complex with ARC1 that is functional in terms of aminoacylation. ARC1 increases the affinity for cognate tRNAs due to the presence of a tRNA binding domain in the middle and C-terminal part of ARC1.

Its subcellular location is the cytoplasm. It catalyses the reaction tRNA(Met) + L-methionine + ATP = L-methionyl-tRNA(Met) + AMP + diphosphate. Functionally, catalyzes the attachment of methionine to tRNA(Met) in a two-step reaction: methionine is first activated by ATP to form Met-AMP and then transferred to the acceptor end of tRNA(Met). This Saccharomyces cerevisiae (strain ATCC 204508 / S288c) (Baker's yeast) protein is Methionine--tRNA ligase, cytoplasmic (MES1).